A 56-amino-acid chain; its full sequence is Sec-independent protein translocase protein TatA (56 aa).

Residues 1-21 (MALGPWQIFLILVIILVLFGA) form a helical membrane-spanning segment.

Belongs to the TatA/E family. In terms of assembly, the Tat system comprises two distinct complexes: a TatABC complex, containing multiple copies of TatA, TatB and TatC subunits, and a separate TatA complex, containing only TatA subunits. Substrates initially bind to the TatABC complex, which probably triggers association of the separate TatA complex to form the active translocon.

Its subcellular location is the cell inner membrane. Functionally, part of the twin-arginine translocation (Tat) system that transports large folded proteins containing a characteristic twin-arginine motif in their signal peptide across membranes. TatA could form the protein-conducting channel of the Tat system. This is Sec-independent protein translocase protein TatA from Ehrlichia ruminantium (strain Welgevonden).